Here is a 554-residue protein sequence, read N- to C-terminus: Glucose-6-phosphate isomerase (554 aa).

Glu-358 (proton donor) is an active-site residue. Active-site residues include His-389 and Lys-515.

Belongs to the GPI family.

It is found in the cytoplasm. It carries out the reaction alpha-D-glucose 6-phosphate = beta-D-fructose 6-phosphate. The protein operates within carbohydrate biosynthesis; gluconeogenesis. Its pathway is carbohydrate degradation; glycolysis; D-glyceraldehyde 3-phosphate and glycerone phosphate from D-glucose: step 2/4. Catalyzes the reversible isomerization of glucose-6-phosphate to fructose-6-phosphate. In Mycobacterium leprae (strain Br4923), this protein is Glucose-6-phosphate isomerase.